Here is a 528-residue protein sequence, read N- to C-terminus: Poly(A) RNA polymerase GLD2 (528 aa).

Disordered stretches follow at residues 1 to 41 (MYPN…QPQQ) and 99 to 121 (RDQS…KRRS). 2 stretches are compositionally biased toward low complexity: residues 16–32 (PCEQ…EQPL) and 102–113 (SPLISPASPSSS). Residues Asp-259 and Asp-261 each contribute to the Mg(2+) site. The 54-residue stretch at 428 to 481 (LGDLLLGFLKYFAIEFDWSKDIISVREAKALPRSDDYEWRNKFICVEEPYDRTN) folds into the PAP-associated domain.

The protein belongs to the DNA polymerase type-B-like family. GLD2 subfamily. In terms of assembly, component of a complex at least composed of cpeb1, cpsf1, tent2/gld2, pabpc1/ePAB, parn and sympk. Following oocyte maturation, parn is expelled from the complex. Interacts with rbm9 and sympk. Requires Mg(2+) as cofactor. Mn(2+) serves as cofactor.

It localises to the cytoplasm. The catalysed reaction is RNA(n) + ATP = RNA(n)-3'-adenine ribonucleotide + diphosphate. Its function is as follows. Cytoplasmic poly(A) RNA polymerase that adds successive AMP monomers to the 3'-end of specific RNAs, forming a poly(A) tail. In contrast to the canonical nuclear poly(A) RNA polymerase, it only adds poly(A) to selected cytoplasmic mRNAs during oocyte maturation. Plays a central role during oocyte maturation by mediating polyadenylation of dormant mRNAs, which contain 5'AAUAAA-3' sequence in their 3'-UTR. In immature oocytes, polyadenylation of poly(A) tails is counteracted by the ribonuclease parn. During maturation parn is excluded from the ribonucleoprotein complex, allowing poly(A) elongation and activation of mRNAs. May not play a role in replication-dependent histone mRNA degradation. The sequence is that of Poly(A) RNA polymerase GLD2 (tent2) from Xenopus tropicalis (Western clawed frog).